The sequence spans 95 residues: Aspartyl/glutamyl-tRNA(Asn/Gln) amidotransferase subunit C (95 aa).

It belongs to the GatC family. In terms of assembly, heterotrimer of A, B and C subunits.

The catalysed reaction is L-glutamyl-tRNA(Gln) + L-glutamine + ATP + H2O = L-glutaminyl-tRNA(Gln) + L-glutamate + ADP + phosphate + H(+). It catalyses the reaction L-aspartyl-tRNA(Asn) + L-glutamine + ATP + H2O = L-asparaginyl-tRNA(Asn) + L-glutamate + ADP + phosphate + 2 H(+). Its function is as follows. Allows the formation of correctly charged Asn-tRNA(Asn) or Gln-tRNA(Gln) through the transamidation of misacylated Asp-tRNA(Asn) or Glu-tRNA(Gln) in organisms which lack either or both of asparaginyl-tRNA or glutaminyl-tRNA synthetases. The reaction takes place in the presence of glutamine and ATP through an activated phospho-Asp-tRNA(Asn) or phospho-Glu-tRNA(Gln). This chain is Aspartyl/glutamyl-tRNA(Asn/Gln) amidotransferase subunit C, found in Syntrophus aciditrophicus (strain SB).